Here is a 190-residue protein sequence, read N- to C-terminus: Bifunctional protein PyrR (190 aa).

A PRPP-binding motif is present at residues 112 to 124 (VILVDDVLYSGRS).

It belongs to the purine/pyrimidine phosphoribosyltransferase family. PyrR subfamily.

It catalyses the reaction UMP + diphosphate = 5-phospho-alpha-D-ribose 1-diphosphate + uracil. In terms of biological role, regulates the transcription of the pyrimidine nucleotide (pyr) operon in response to exogenous pyrimidines. Functionally, also displays a weak uracil phosphoribosyltransferase activity which is not physiologically significant. This is Bifunctional protein PyrR from Mycolicibacterium paratuberculosis (strain ATCC BAA-968 / K-10) (Mycobacterium paratuberculosis).